The primary structure comprises 120 residues: Small ribosomal subunit protein eS24 (120 aa).

Residues 101–120 are disordered; the sequence is RDAGTKQKKGGSKGGQGAKG.

It belongs to the eukaryotic ribosomal protein eS24 family.

The polypeptide is Small ribosomal subunit protein eS24 (Saccharolobus islandicus (strain M.16.4 / Kamchatka #3) (Sulfolobus islandicus)).